The sequence spans 226 residues: 2-C-methyl-D-erythritol 4-phosphate cytidylyltransferase (226 aa).

This sequence belongs to the IspD/TarI cytidylyltransferase family. IspD subfamily.

It catalyses the reaction 2-C-methyl-D-erythritol 4-phosphate + CTP + H(+) = 4-CDP-2-C-methyl-D-erythritol + diphosphate. It functions in the pathway isoprenoid biosynthesis; isopentenyl diphosphate biosynthesis via DXP pathway; isopentenyl diphosphate from 1-deoxy-D-xylulose 5-phosphate: step 2/6. In terms of biological role, catalyzes the formation of 4-diphosphocytidyl-2-C-methyl-D-erythritol from CTP and 2-C-methyl-D-erythritol 4-phosphate (MEP). The polypeptide is 2-C-methyl-D-erythritol 4-phosphate cytidylyltransferase (Rhodococcus jostii (strain RHA1)).